A 300-amino-acid polypeptide reads, in one-letter code: MVKKYGIVAIVGKPNVGKSTLINAIMRKKVSIISNKPQTTRNAIKEIYEDDDSAIIFTDTPGFHEPSNKLDLFLNHEIEVSYKEANVILFVSSMDKELSEDDFEIINLIKESNKENVILVISKAEVAKNQDKIDERVHQLNKYIQFKDVIQISALHVINIDKLINTIKQYLHKDVVTDYFRQKVEKEDKFIIAETIREQCLLNLNHEVPHGVGVEIDESKYNQEANHWIIKASIIIEKNSHKPIVIGQNGAMIKKISMAARKQLHEIYDCHISLTIFVKVENNWRENNNVVKSLGYKIKK.

In terms of domain architecture, Era-type G spans 4 to 173; that stretch reads KYGIVAIVGK…INTIKQYLHK (170 aa). Positions 12 to 19 are G1; that stretch reads GKPNVGKS. Position 12–19 (12–19) interacts with GTP; that stretch reads GKPNVGKS. The G2 stretch occupies residues 38 to 42; that stretch reads QTTRN. The tract at residues 59 to 62 is G3; it reads DTPG. Residues 59–63 and 122–125 contribute to the GTP site; these read DTPGF and SKAE. Positions 122 to 125 are G4; sequence SKAE. Residues 152–154 form a G5 region; that stretch reads ISA. A KH type-2 domain is found at 204 to 282; it reads LNHEVPHGVG…SLTIFVKVEN (79 aa).

This sequence belongs to the TRAFAC class TrmE-Era-EngA-EngB-Septin-like GTPase superfamily. Era GTPase family. As to quaternary structure, monomer.

Its subcellular location is the cytoplasm. It localises to the cell membrane. An essential GTPase that binds both GDP and GTP, with rapid nucleotide exchange. Plays a role in 16S rRNA processing and 30S ribosomal subunit biogenesis and possibly also in cell cycle regulation and energy metabolism. This is GTPase Era from Ureaplasma urealyticum serovar 10 (strain ATCC 33699 / Western).